A 217-amino-acid chain; its full sequence is Peroxiredoxin (217 aa).

Positions 2-159 (VVIGEKFPEV…IVRLVKALQT (158 aa)) constitute a Thioredoxin domain. Residue Cys-46 is the Cysteine sulfenic acid (-SOH) intermediate of the active site. Arg-122 contacts substrate.

The protein belongs to the peroxiredoxin family. Prx6 subfamily. As to quaternary structure, homodecamer. Pentamer of dimers that assemble into a ring structure.

It is found in the cytoplasm. It catalyses the reaction a hydroperoxide + [thioredoxin]-dithiol = an alcohol + [thioredoxin]-disulfide + H2O. Thiol-specific peroxidase that catalyzes the reduction of hydrogen peroxide and organic hydroperoxides to water and alcohols, respectively. Plays a role in cell protection against oxidative stress by detoxifying peroxides. The protein is Peroxiredoxin of Methanococcus maripaludis (strain DSM 14266 / JCM 13030 / NBRC 101832 / S2 / LL).